The following is a 233-amino-acid chain: Phosphoribosylformylglycinamidine synthase subunit PurQ (233 aa).

The Glutamine amidotransferase type-1 domain maps to 9–233 (RIGIVTFPGS…LSGFLSAFSS (225 aa)). C92 serves as the catalytic Nucleophile. Catalysis depends on residues H201 and E203.

In terms of assembly, part of the FGAM synthase complex composed of 1 PurL, 1 PurQ and 2 PurS subunits.

The protein resides in the cytoplasm. It catalyses the reaction N(2)-formyl-N(1)-(5-phospho-beta-D-ribosyl)glycinamide + L-glutamine + ATP + H2O = 2-formamido-N(1)-(5-O-phospho-beta-D-ribosyl)acetamidine + L-glutamate + ADP + phosphate + H(+). The catalysed reaction is L-glutamine + H2O = L-glutamate + NH4(+). It functions in the pathway purine metabolism; IMP biosynthesis via de novo pathway; 5-amino-1-(5-phospho-D-ribosyl)imidazole from N(2)-formyl-N(1)-(5-phospho-D-ribosyl)glycinamide: step 1/2. Functionally, part of the phosphoribosylformylglycinamidine synthase complex involved in the purines biosynthetic pathway. Catalyzes the ATP-dependent conversion of formylglycinamide ribonucleotide (FGAR) and glutamine to yield formylglycinamidine ribonucleotide (FGAM) and glutamate. The FGAM synthase complex is composed of three subunits. PurQ produces an ammonia molecule by converting glutamine to glutamate. PurL transfers the ammonia molecule to FGAR to form FGAM in an ATP-dependent manner. PurS interacts with PurQ and PurL and is thought to assist in the transfer of the ammonia molecule from PurQ to PurL. The chain is Phosphoribosylformylglycinamidine synthase subunit PurQ from Frankia casuarinae (strain DSM 45818 / CECT 9043 / HFP020203 / CcI3).